Consider the following 179-residue polypeptide: Large ribosomal subunit protein uL5 (179 aa).

This sequence belongs to the universal ribosomal protein uL5 family. Part of the 50S ribosomal subunit; part of the 5S rRNA/L5/L18/L25 subcomplex. Contacts the 5S rRNA and the P site tRNA. Forms a bridge to the 30S subunit in the 70S ribosome.

In terms of biological role, this is one of the proteins that bind and probably mediate the attachment of the 5S RNA into the large ribosomal subunit, where it forms part of the central protuberance. In the 70S ribosome it contacts protein S13 of the 30S subunit (bridge B1b), connecting the 2 subunits; this bridge is implicated in subunit movement. Contacts the P site tRNA; the 5S rRNA and some of its associated proteins might help stabilize positioning of ribosome-bound tRNAs. This Actinobacillus pleuropneumoniae serotype 5b (strain L20) protein is Large ribosomal subunit protein uL5.